A 107-amino-acid polypeptide reads, in one-letter code: U1-lycotoxin-Ls1a (107 aa).

An N-terminal signal peptide occupies residues 1-20; sequence MMKVLVVVALLVTLISYSSS. The propeptide occupies 21-41; the sequence is EGIDDLEADELLSLMANEQTR. Disulfide bonds link Cys-44/Cys-59, Cys-51/Cys-68, Cys-58/Cys-86, and Cys-70/Cys-84.

It belongs to the neurotoxin 19 (CSTX) family. 04 (U1-Lctx) subfamily. Expressed by the venom gland.

The protein resides in the secreted. The polypeptide is U1-lycotoxin-Ls1a (Lycosa singoriensis (Wolf spider)).